Here is a 311-residue protein sequence, read N- to C-terminus: CD-NTase-associated protein 12 (311 aa).

The 118-residue stretch at 4–121 (RIFIGSSKEG…LLGITVPQFE (118 aa)) folds into the TIR domain. The segment at 157 to 311 (STVLAIGYFY…RNIVKIIQEE (155 aa)) is STING domain. 3 residues coordinate 3',3'-c-di-GMP: Phe-168, Pro-232, and Asp-249.

The protein in the C-terminal section; belongs to the bacterial STING family. In terms of assembly, forms homodimers; in the presence of c-di-GMP forms filaments with an ordered array of parallel-stacked subunits.

It carries out the reaction NAD(+) + H2O = ADP-D-ribose + nicotinamide + H(+). Its activity is regulated as follows. NAD(+) hydrolase activity is strongly stimulated by c-di-GMP, weakly by 3'3'-cGAMP, very weakly by c-di-AMP but not at all by 2'3'-cGAMP. Self-association of TIR domains is required for NADase activity. Effector protein of a CBASS antiviral system with NAD(+) hydrolase activity. CBASS (cyclic oligonucleotide-based antiphage signaling system) provides immunity against bacteriophage. The CD-NTase protein synthesizes cyclic nucleotides in response to infection; these serve as specific second messenger signals. The signals activate a diverse range of effectors, leading to bacterial cell death and thus abortive phage infection. A type I-D CBASS(GG) system. In terms of biological role, binds c-di-GMP, does not bind cUMP-AMP. Upon activation by c-di-GMP forms filaments which hydrolyze NAD(+); filament formation is required for enzyme activation. This Flavobacterium daejeonense protein is CD-NTase-associated protein 12.